The following is a 103-amino-acid chain: UPF0102 protein aq_041 (103 aa).

Belongs to the UPF0102 family.

The sequence is that of UPF0102 protein aq_041 from Aquifex aeolicus (strain VF5).